A 784-amino-acid polypeptide reads, in one-letter code: 1-phosphatidylinositol 4,5-bisphosphate phosphodiesterase delta-3-A (784 aa).

Positions 1 to 25 (MLGRKKNPETVQTESKSVESKTHDP) are disordered. Positions 16–25 (KSVESKTHDP) are enriched in basic and acidic residues. In terms of domain architecture, PH spans 38 to 149 (LLMLQGSKMM…WVRGIRTLKD (112 aa)). A substrate binding region spans residues 48–78 (KVRSQRWRKDRRLKLLEDCVTVWCESSKTSR). 3 consecutive EF-hand domains span residues 159-194 (KLDH…INID), 195-230 (LNEQ…MMRR), and 227-262 (MMRR…QGED). Ca(2+)-binding residues include D172, N174, D176, K178, E183, D208, S210, D212, R214, and E219. The PI-PLC X-box domain maps to 313 to 458 (QDMSKPLAHY…LKGRILLKGK (146 aa)). H328 is an active-site residue. Residues N329, E358, and D360 each coordinate Ca(2+). Residue H373 is part of the active site. Residue E407 participates in Ca(2+) binding. Residues K456 and K458 each contribute to the substrate site. The tract at residues 473–498 (FTNSSDEESVAGGNKKESKKDLARSA) is disordered. Residues 486-495 (NKKESKKDLA) are compositionally biased toward basic and acidic residues. Positions 506–621 (LSDLVVYCQS…GYVLKPEFLC (116 aa)) constitute a PI-PLC Y-box domain. Substrate contacts are provided by S534 and R561. The C2 domain occupies 621–750 (CDPKSDFDPE…TGYRHVHLLK (130 aa)). Ca(2+) contacts are provided by I664, D666, N690, D719, and D721.

It depends on Ca(2+) as a cofactor.

The protein resides in the membrane. Its subcellular location is the cytoplasm. The protein localises to the cleavage furrow. The enzyme catalyses a 1,2-diacyl-sn-glycero-3-phospho-(1D-myo-inositol-4,5-bisphosphate) + H2O = 1D-myo-inositol 1,4,5-trisphosphate + a 1,2-diacyl-sn-glycerol + H(+). Its function is as follows. Hydrolyzes the phosphatidylinositol 4,5-bisphosphate (PIP2) to generate 2 second messenger molecules diacylglycerol (DAG) and inositol 1,4,5-trisphosphate (IP3). DAG mediates the activation of protein kinase C (PKC), while IP3 releases Ca(2+) from intracellular stores. The sequence is that of 1-phosphatidylinositol 4,5-bisphosphate phosphodiesterase delta-3-A (plcd3a) from Danio rerio (Zebrafish).